A 199-amino-acid polypeptide reads, in one-letter code: Recombination protein RecR (199 aa).

Residues 57 to 72 (CQQCRTFTEQNLCAIC) form a C4-type zinc finger. A Toprim domain is found at 81–176 (GMICVVEMPV…KVSRIAHGVP (96 aa)).

It belongs to the RecR family.

In terms of biological role, may play a role in DNA repair. It seems to be involved in an RecBC-independent recombinational process of DNA repair. It may act with RecF and RecO. The protein is Recombination protein RecR of Psychromonas ingrahamii (strain DSM 17664 / CCUG 51855 / 37).